A 381-amino-acid chain; its full sequence is L-lactate dehydrogenase (381 aa).

Positions 1 to 380 constitute an FMN hydroxy acid dehydrogenase domain; that stretch reads MIISASTDYR…SRDSLVRELG (380 aa). Tyr24 provides a ligand contact to substrate. Positions 106 and 127 each coordinate FMN. Residue Tyr129 participates in substrate binding. Thr155 provides a ligand contact to FMN. Arg164 serves as a coordination point for substrate. Residue Lys251 participates in FMN binding. His275 (proton acceptor) is an active-site residue. Arg278 lines the substrate pocket. FMN is bound at residue 306-330; it reads DSGIRSGLDVVRMIALGADTVLIGR.

The protein belongs to the FMN-dependent alpha-hydroxy acid dehydrogenase family. Homotetramer. FMN is required as a cofactor.

Its subcellular location is the cell inner membrane. It catalyses the reaction (S)-lactate + A = pyruvate + AH2. Functionally, catalyzes the conversion of L-lactate to pyruvate. Is coupled to the respiratory chain. The polypeptide is L-lactate dehydrogenase (Pseudomonas putida (strain W619)).